A 146-amino-acid chain; its full sequence is MAFLVFAFLTLMAVETYGSLFQFRLMINYLTGKLPILSHSFYGCYCGAGGSGWPKDAIDWCCQVHDCCYGRMSASGCDPYFQPYNFSYINKNLQCVETDTSGCPRRICECDRLASICFQQHDATYNSSNIDPKRKGCGTKSPPCPN.

Residues 1–18 (MAFLVFAFLTLMAVETYG) form the signal peptide. Intrachain disulfides connect cysteine 44–cysteine 137, cysteine 46–cysteine 62, cysteine 61–cysteine 117, cysteine 67–cysteine 144, cysteine 68–cysteine 110, cysteine 77–cysteine 103, and cysteine 95–cysteine 108. Ca(2+) is bound by residues tyrosine 45, glycine 47, and glycine 49. Histidine 65 is an active-site residue. Aspartate 66 provides a ligand contact to Ca(2+). The N-linked (GlcNAc...) asparagine glycan is linked to asparagine 85. The active site involves aspartate 111. An N-linked (GlcNAc...) asparagine glycan is attached at asparagine 126.

Ca(2+) serves as cofactor. Post-translationally, N-glycosylated. Glycosylated with mannose chains including Man2(GlcNAc), Man2(GlcNAc)2, Man2(GlcNAc)3, Man2(GlcNAc)4 and Man2(GlcNAc)5. Expressed by the skin glands (at protein level).

It localises to the secreted. It carries out the reaction a 1,2-diacyl-sn-glycero-3-phosphocholine + H2O = a 1-acyl-sn-glycero-3-phosphocholine + a fatty acid + H(+). In terms of biological role, PLA2 catalyzes the calcium-dependent hydrolysis of the 2-acyl groups in 3-sn-phosphoglycerides. The chain is Phospholipase A2 from Pithecopus azureus (Orange-legged monkey tree frog).